The primary structure comprises 266 residues: Vitamin B12-binding protein (266 aa).

A signal peptide spans 1-22 (MVKQMFRALVALLLTLPVWLYA). Positions 25–266 (RVITLSPANT…QLCNALSQVN (242 aa)) constitute a Fe/B12 periplasmic-binding domain. Residues tyrosine 50 and 242–246 (DWFER) contribute to the cyanocob(III)alamin site. Cysteines 183 and 259 form a disulfide.

It belongs to the BtuF family. The complex is composed of two ATP-binding proteins (BtuD), two transmembrane proteins (BtuC) and a solute-binding protein (BtuF).

The protein localises to the periplasm. In terms of biological role, part of the ABC transporter complex BtuCDF involved in vitamin B12 import. Binds vitamin B12 and delivers it to the periplasmic surface of BtuC. This is Vitamin B12-binding protein from Salmonella choleraesuis (strain SC-B67).